Consider the following 255-residue polypeptide: Type III pantothenate kinase (255 aa).

ATP is bound at residue 7 to 14 (DVGNTRLK). Residues Y96 and 103–106 (GADR) each bind substrate. D105 functions as the Proton acceptor in the catalytic mechanism. Position 133 (T133) interacts with ATP. T183 contributes to the substrate binding site.

This sequence belongs to the type III pantothenate kinase family. Homodimer. It depends on NH4(+) as a cofactor. The cofactor is K(+).

It is found in the cytoplasm. It carries out the reaction (R)-pantothenate + ATP = (R)-4'-phosphopantothenate + ADP + H(+). Its pathway is cofactor biosynthesis; coenzyme A biosynthesis; CoA from (R)-pantothenate: step 1/5. In terms of biological role, catalyzes the phosphorylation of pantothenate (Pan), the first step in CoA biosynthesis. The chain is Type III pantothenate kinase from Polaromonas sp. (strain JS666 / ATCC BAA-500).